A 654-amino-acid polypeptide reads, in one-letter code: Protein fem-1 homolog A-like (654 aa).

ANK repeat units lie at residues 2 to 31, 40 to 70, 82 to 111, 115 to 145, 149 to 178, 182 to 211, and 214 to 243; these read DLHTAVYNAAHDGKLPLLQKLLASRGREEL, GGGTPLLIAARRGHLDVVEYLVDHCGASVEA, EGAPPLWAASAAGHLAVVRSLLHRGASVNR, TNSTPLRAACFNGHLDVVRCLVGEHKADLEV, HGHTCLMISCYKGHREIARYLLERGAQVNR, KGNTALHDCAESGSLEILQLLLSCHARMER, and YGMTPLLAASITGHTNIVEYLIQEQPSHEQ. Ser108 carries the post-translational modification Phosphoserine. A disordered region spans residues 241-265; it reads HEQLSGTELPGEGSSQMAGNHCSTP. Polar residues predominate over residues 253 to 263; the sequence is GSSQMAGNHCS. TPR repeat units lie at residues 283 to 317 and 375 to 408; these read VEALELLGATYVDKKRDLLGALKHWRRAMELRHQG and SYYIRYRGAVYADSGNFERCIRLWKYALDMQQNN. ANK repeat units lie at residues 519 to 561 and 565 to 594; these read NGFT…DPDS and DNNSPLHIAAQNNCPAIMDALIEAGAHMDA. Ser608 is subject to Phosphoserine.

Belongs to the fem-1 family. As to quaternary structure, component of a CRL2 E3 ubiquitin-protein ligase complex, also named ECS (Elongin BC-CUL2/5-SOCS-box protein) complex, composed of CUL2, Elongin BC (ELOB and ELOC), RBX1 and substrate-specific adapter FEM1A.

Its subcellular location is the mitochondrion. It is found in the cytoplasm. It functions in the pathway protein modification; protein ubiquitination. In terms of biological role, substrate-recognition component of a Cul2-RING (CRL2) E3 ubiquitin-protein ligase complex of the DesCEND (destruction via C-end degrons) pathway, which recognizes a C-degron located at the extreme C terminus of target proteins, leading to their ubiquitination and degradation. The C-degron recognized by the DesCEND pathway is usually a motif of less than ten residues and can be present in full-length proteins, truncated proteins or proteolytically cleaved forms. The CRL2(FEM1A) complex specifically recognizes proteins with an arginine at the C-terminus: recognizes and binds proteins ending with -Lys/Arg-Xaa-Arg and -Lys/Arg-Xaa-Xaa-Arg C-degrons, such as SIL1 or OR51B2, leading to their ubiquitination and degradation. The protein is Protein fem-1 homolog A-like of Mus musculus (Mouse).